We begin with the raw amino-acid sequence, 330 residues long: Ribose-phosphate pyrophosphokinase (330 aa).

ATP contacts are provided by residues 40 to 42 (DGE) and 99 to 100 (RQ). Mg(2+) is bound by residues His-133 and Asp-174. The active site involves Lys-197. D-ribose 5-phosphate-binding positions include Arg-199, Asp-223, and 227 to 231 (DTGGT).

The protein belongs to the ribose-phosphate pyrophosphokinase family. Class I subfamily. In terms of assembly, homohexamer. Mg(2+) serves as cofactor.

The protein localises to the cytoplasm. The enzyme catalyses D-ribose 5-phosphate + ATP = 5-phospho-alpha-D-ribose 1-diphosphate + AMP + H(+). Its pathway is metabolic intermediate biosynthesis; 5-phospho-alpha-D-ribose 1-diphosphate biosynthesis; 5-phospho-alpha-D-ribose 1-diphosphate from D-ribose 5-phosphate (route I): step 1/1. In terms of biological role, involved in the biosynthesis of the central metabolite phospho-alpha-D-ribosyl-1-pyrophosphate (PRPP) via the transfer of pyrophosphoryl group from ATP to 1-hydroxyl of ribose-5-phosphate (Rib-5-P). This chain is Ribose-phosphate pyrophosphokinase, found in Ureaplasma parvum serovar 3 (strain ATCC 700970).